The primary structure comprises 172 residues: MASKWNWSGTKGRRTPRRPYGRPYKSSVPTTRVVVHQSAVLKKDEVVGTEIKPEGDVARYKMKKVMLTCTLRMAPGELVNYLIVKCNSPISSWSAAFTSPALLVKESCQDMITIIAKGKVESNGVAGTDCTKSFNRFIKLGAGITQTQHLYVVLYTSVALKAVLEHRVYVEV.

Residues 1–26 (MASKWNWSGTKGRRTPRRPYGRPYKS) are disordered. The segment covering 11–20 (KGRRTPRRPY) has biased composition (basic residues).

It belongs to the nanoviridae capsid protein family.

It localises to the virion. This is Capsid protein (DNA-S) from Faba bean necrotic yellows virus (isolate Egyptian EV1-93) (FBNYV).